Here is a 142-residue protein sequence, read N- to C-terminus: MTDLQMEVEVDTNSSLQESLPKPQVMYRCKKCRRIVAIEENIVPHEPGKGEECFAWKKRSGNSEQVQCSSIFVEPMKWMQTIHDGMVEEKLLCFGCNGRLGYFNWAGMQCSCGAWVNPAFQLNKSRIDECKSEPNPNLNMET.

It belongs to the protein-tyrosine phosphatase family. Non-receptor class dual specificity subfamily.

This chain is Probable inactive dual specificity protein phosphatase-like At4g18593, found in Arabidopsis thaliana (Mouse-ear cress).